A 713-amino-acid polypeptide reads, in one-letter code: Protein argonaute (713 aa).

The N-terminal domain stretch occupies residues 18–129 (EFIPKEVHFY…IKNIRKHKVV (112 aa)). The 94-residue stretch at 164–257 (HLWDFVNRDK…FAPQFCNLVF (94 aa)) folds into the PAZ domain. A binds 3'-end of gDNA region spans residues 213-218 (HIIKYY). Positions 346–488 (DVPEIIRNKN…QIMGKLGIKY (143 aa)) are mid domain. A Piwi domain is found at 426–699 (CFALIIGKEK…FVKALGKNWK (274 aa)). A divalent metal cation-binding residues include Gln457, Gln479, and Lys483. Positions 457–460 (QNIL) are binds 5'-phosphorylated end of gDNA. Residues Asp504, Glu541, and Asp570 contribute to the active site. Asp504 provides a ligand contact to Mn(2+). Residue Asp570 coordinates Mn(2+). Binds 5'-phosphorylated end of gDNA regions lie at residues 625–632 (HKTPFGSN) and 678–679 (LR). Asp688 is a catalytic residue. Mn(2+) contacts are provided by Asp688 and Ile713.

It belongs to the argonaute family. Long pAgo subfamily. It depends on a divalent metal cation as a cofactor.

With respect to regulation, DNA cleavage is inhibited by EDTA. A DNA-guided ssDNA endonuclease that may play a role in defense against invading genetic elements. Uses short ssDNA sequences as guides (gDNA) to bind complementary target strands, resulting in slicing of the target DNA (tDNA). Endonucleolytically cleaves tDNA (the gDNA indicates where to cleave); two major and two minor products are seen which correspond to cleavage sites between nucleotides 9/10, 10/11, 13/14, and 14/15 downstream of the target residue base-paired with the 5'-end of the gDNA. Efficient guide-dependent tDNA cleavage requires a minimal length of 15 bp and is maximal at 19 bp. Prefers gDNA with 5'-phosphorylated purines and 3'-pyrimidines; changing these bases alters the cleavage activity and patterns. Also has guide-independent activity on tDNA called 'chopping'. Probably a first round of guide-independent activity on an invading plasmid or virus would generate guide DNAs for subsequent, more efficient, guide-dependent degradation of invading nucleic acids. Has no activity on substrate with a mismatch at positions 10 and 11, on ssDNA or RNA, nor on DNA:RNA hybrids. Digests longer (750 bp) dsDNA as well as circular plasmid and naked genomic DNA, but not chromatin, in a guide DNA-independent manner. Addition of endogenous histone A3 protects DNA from cleavage, while cleavage is insensitive to methylation. When plasmid encoding active or mutated protein (Ala-541) is transformed into Sulfolobus acidocaldarius about 25-fold fewer transformants are found with active protein; reduced levels of plasmid are found in wild-type transformed cells. While S.acidocaldarius grows at a similar temperature to M.jannaschii (70 to 80 degrees Celsius) it has very different histone-like proteins, which presumably do not protect against MjAgo. Binds ssDNA, dsDNA and DNA-RNA hybrids; binding is most efficient with dsDNA. The protein is Protein argonaute of Methanocaldococcus jannaschii (strain ATCC 43067 / DSM 2661 / JAL-1 / JCM 10045 / NBRC 100440) (Methanococcus jannaschii).